The following is a 476-amino-acid chain: Ubiquinone biosynthesis monooxygenase COQ6, mitochondrial (476 aa).

Residues 1–42 (MAARIGPMAGLLCVRWWSTAQLAARGGPLVACRRWTSSSTDS) constitute a mitochondrion transit peptide.

The protein belongs to the UbiH/COQ6 family. As to quaternary structure, component of a multi-subunit COQ enzyme complex, composed of at least COQ3, COQ4, COQ5, COQ6, COQ7 and COQ9. Interacts with COQ8B and COQ7. FAD is required as a cofactor. In terms of tissue distribution, in the kidney, expressed almost exclusively in glomerular podocytes. In the inner ear, expressed in the spiral ganglion, as well as in stria vascularis and spiral ligament cells.

It is found in the mitochondrion inner membrane. Its subcellular location is the golgi apparatus. The protein resides in the cell projection. The catalysed reaction is 4-hydroxy-3-(all-trans-decaprenyl)benzoate + 2 reduced [2Fe-2S]-[ferredoxin] + O2 + 2 H(+) = 3,4-dihydroxy-5-(all-trans-decaprenyl)benzoate + 2 oxidized [2Fe-2S]-[ferredoxin] + H2O. It catalyses the reaction 2-methoxy-6-(all-trans-decaprenyl)phenol + 2 reduced [2Fe-2S]-[ferredoxin] + O2 + 2 H(+) = 2-methoxy-6-(all-trans-decaprenyl)benzene-1,4-diol + 2 oxidized [2Fe-2S]-[ferredoxin] + H2O. Its pathway is cofactor biosynthesis; ubiquinone biosynthesis. In terms of biological role, FAD-dependent monooxygenase required for two non-consecutive steps during ubiquinone biosynthesis. Required for the C5-ring hydroxylation during ubiquinone biosynthesis by catalyzing the hydroxylation of 4-hydroxy-3-(all-trans-decaprenyl)benzoic acid to 3,4-dihydroxy-5-(all-trans-decaprenyl)benzoic acid. Also acts downstream of COQ4, for the C1-hydroxylation during ubiquinone biosynthesis by catalyzing the hydroxylation of 2-methoxy-6-(all-trans-decaprenyl)phenol to 2-methoxy-6-(all-trans-decaprenyl)benzene-1,4-diol. The electrons required for the hydroxylation reaction are funneled indirectly to COQ6 from NADPH via a ferredoxin/ferredoxin reductase system composed of FDX2 and FDXR. This chain is Ubiquinone biosynthesis monooxygenase COQ6, mitochondrial, found in Rattus norvegicus (Rat).